Reading from the N-terminus, the 1563-residue chain is Integrator complex subunit 5-like protein (1563 aa).

Basic and acidic residues-rich tracts occupy residues 1 to 21 (MKEE…RNDN) and 31 to 44 (EDWR…KNEN). Disordered regions lie at residues 1 to 63 (MKEE…YDDD), 102 to 208 (KKSK…NITY), and 270 to 310 (NSLN…QQNP). A compositionally biased stretch (acidic residues) spans 52 to 63 (GDSDDDDYYDDD). Low complexity-rich tracts occupy residues 109-133 (TAAT…TATA) and 141-202 (NNLL…NNNN). A helical transmembrane segment spans residues 350-370 (DSIINWSLSTLTIITRLLIIL). The segment covering 381–398 (QQQQQQQQQQQQQQQQQQ) has biased composition (low complexity). 4 disordered regions span residues 381-417 (QQQQ…RQPI), 466-498 (SKSS…SSKT), 637-694 (FDNN…DNSS), and 784-828 (ILNN…SQEI). Pro residues predominate over residues 405 to 414 (FPPPPPPPLR). Composition is skewed to low complexity over residues 468-496 (SSSS…SSSS), 639-686 (NNNN…NNNN), and 786-824 (NNNN…QQQQ). Residues 877-897 (IIIKLISLIGMDSIYSSLIIL) form a helical membrane-spanning segment. Disordered stretches follow at residues 1154 to 1173 (SGNF…DEYG) and 1268 to 1303 (KQRM…DQNE). Residues 1160–1172 (GDDDDDEYGDDEY) are compositionally biased toward acidic residues. Residues 1277–1288 (SIQQNGNINNEQ) show a composition bias toward low complexity. Acidic residues predominate over residues 1289 to 1303 (QQEEDDNDDADDQNE).

This sequence belongs to the Integrator subunit 5 family. In terms of assembly, component of the Integrator complex. The core complex associates with protein phosphatase 2A subunits, to form the Integrator-PP2A (INTAC) complex.

The protein resides in the nucleus. It localises to the cytoplasm. The protein localises to the nucleus membrane. Its function is as follows. Component of the integrator complex, a multiprotein complex that terminates RNA polymerase II (Pol II) transcription in the promoter-proximal region of genes. The integrator complex provides a quality checkpoint during transcription elongation by driving premature transcription termination of transcripts that are unfavorably configured for transcriptional elongation: the complex terminates transcription by (1) catalyzing dephosphorylation of the C-terminal domain (CTD) of Pol II subunit polr2a, (2) degrading the exiting nascent RNA transcript via endonuclease activity and (3) promoting the release of Pol II from bound DNA. The integrator complex is also involved in terminating the synthesis of non-coding Pol II transcripts, such as enhancer RNAs (eRNAs), small nuclear RNAs (snRNAs), telomerase RNAs and long non-coding RNAs (lncRNAs). This chain is Integrator complex subunit 5-like protein, found in Dictyostelium discoideum (Social amoeba).